The following is a 338-amino-acid chain: Large ribosomal subunit protein uL10 (338 aa).

The segment covering 298-308 has biased composition (low complexity); it reads AAQQTQTQQST. Positions 298 to 338 are disordered; the sequence is AAQQTQTQQSTAEEKKEEKKEEEKKGPSEEEIGSGLASLFG. Over residues 309–325 the composition is skewed to basic and acidic residues; the sequence is AEEKKEEKKEEEKKGPS.

This sequence belongs to the universal ribosomal protein uL10 family. As to quaternary structure, part of the 50S ribosomal subunit. Forms part of the ribosomal stalk which helps the ribosome interact with GTP-bound translation factors. Forms a heptameric L10(L12)2(L12)2(L12)2 complex, where L10 forms an elongated spine to which the L12 dimers bind in a sequential fashion.

Its function is as follows. Forms part of the ribosomal stalk, playing a central role in the interaction of the ribosome with GTP-bound translation factors. The sequence is that of Large ribosomal subunit protein uL10 from Saccharolobus islandicus (strain M.16.27) (Sulfolobus islandicus).